The chain runs to 477 residues: Phosphomethylpyrimidine synthase (477 aa).

Substrate-binding positions include asparagine 67, methionine 96, tyrosine 125, histidine 160, 180-182 (SRG), 221-224 (DGLR), and glutamate 260. Histidine 264 contacts Zn(2+). A substrate-binding site is contributed by tyrosine 287. Residue histidine 328 coordinates Zn(2+). [4Fe-4S] cluster is bound by residues cysteine 408, cysteine 411, and cysteine 416. Over residues 427–440 (AGDGMDGLESRTDL) the composition is skewed to basic and acidic residues. Positions 427–477 (AGDGMDGLESRTDLDSSAAAAVNRPPTGVHRAEKLDDIPCPVAEDDVAADD) are disordered.

It belongs to the ThiC family. The cofactor is [4Fe-4S] cluster.

It catalyses the reaction 5-amino-1-(5-phospho-beta-D-ribosyl)imidazole + S-adenosyl-L-methionine = 4-amino-2-methyl-5-(phosphooxymethyl)pyrimidine + CO + 5'-deoxyadenosine + formate + L-methionine + 3 H(+). The protein operates within cofactor biosynthesis; thiamine diphosphate biosynthesis. Functionally, catalyzes the synthesis of the hydroxymethylpyrimidine phosphate (HMP-P) moiety of thiamine from aminoimidazole ribotide (AIR) in a radical S-adenosyl-L-methionine (SAM)-dependent reaction. In Natronomonas pharaonis (strain ATCC 35678 / DSM 2160 / CIP 103997 / JCM 8858 / NBRC 14720 / NCIMB 2260 / Gabara) (Halobacterium pharaonis), this protein is Phosphomethylpyrimidine synthase.